The chain runs to 196 residues: Dephospho-CoA kinase (196 aa).

In terms of domain architecture, DPCK spans 5–196 (IIGLTGGIAT…QVDIALNFEL (192 aa)). Residue 13 to 18 (ATGKTT) coordinates ATP.

This sequence belongs to the CoaE family.

It localises to the cytoplasm. The enzyme catalyses 3'-dephospho-CoA + ATP = ADP + CoA + H(+). It participates in cofactor biosynthesis; coenzyme A biosynthesis; CoA from (R)-pantothenate: step 5/5. Its function is as follows. Catalyzes the phosphorylation of the 3'-hydroxyl group of dephosphocoenzyme A to form coenzyme A. This is Dephospho-CoA kinase from Trichormus variabilis (strain ATCC 29413 / PCC 7937) (Anabaena variabilis).